The following is a 436-amino-acid chain: GTPase Der (436 aa).

EngA-type G domains are found at residues 4–167 (PTIA…PNEY) and 175–351 (IKFS…ESQN). GTP contacts are provided by residues 10 to 17 (GRPNVGKS), 57 to 61 (DTGGI), 119 to 122 (NKVD), 181 to 188 (GRPNVGKS), 229 to 233 (DTAGM), and 294 to 297 (NKWD). Residues 352–436 (TRIPSAVLND…PIHLIARKRK (85 aa)) form the KH-like domain.

It belongs to the TRAFAC class TrmE-Era-EngA-EngB-Septin-like GTPase superfamily. EngA (Der) GTPase family. In terms of assembly, associates with the 50S ribosomal subunit.

In terms of biological role, GTPase that plays an essential role in the late steps of ribosome biogenesis. In Streptococcus pneumoniae (strain JJA), this protein is GTPase Der.